A 396-amino-acid polypeptide reads, in one-letter code: MTNEEPLPKKVRLSETDFKVMARDELILRWKQYEAYVQALEGKYTDLNSNDVTGLRESEEKLKQQQQESARRENILVMRLATKEQEMQECTTQIQYLKQVQQPSVAQLRSTMVDPAINLFFLKMKGELEQTKDKLEQAQNELSAWKFTPDSQTGKKLMAKCRMLIQENQELGRQLSQGRIAQLEAELALQKKYSEELKSSQDELNDFIIQLDEEVEGMQSTILVLQQQLKETRQQLAQYQQQQSQASAPSTSRTTSSEPVDQAEVTSKDCSRLANGPSNGSSSRQRTSGSGFHREGSTPEDDFPSSSGNGNKASNSSEERTGRGGSSYINPLSAGYESVDSPTGSENSLTHHSNDTDSSHDPQEEKAVSGKGNRTVGSRHVQNGLDSSVNVQGAVL.

Met1 carries the N-acetylmethionine modification. Residue Ser14 is modified to Phosphoserine. Low complexity-rich tracts occupy residues 240–257 and 278–291; these read QQQQ…TTSS and SNGS…SGSG. The segment at 240-396 is disordered; it reads QQQQSQASAP…SSVNVQGAVL (157 aa). 4 positions are modified to phosphoserine: Ser297, Ser305, Ser306, and Ser341. Low complexity predominate over residues 305–316; the sequence is SSSGNGNKASNS. Residues 340 to 351 show a composition bias toward polar residues; sequence DSPTGSENSLTH. Thr350 is subject to Phosphothreonine. Over residues 352 to 368 the composition is skewed to basic and acidic residues; that stretch reads HSNDTDSSHDPQEEKAV. The segment covering 380–396 has biased composition (polar residues); it reads HVQNGLDSSVNVQGAVL. A Phosphoserine modification is found at Ser388.

This sequence belongs to the fl(2)d family. In terms of assembly, component of the WMM complex, a N6-methyltransferase complex composed of a catalytic subcomplex, named MAC, and of an associated subcomplex, named MACOM. The MAC subcomplex is composed of METTL3 and METTL14. The MACOM subcomplex is composed of WTAP, ZC3H13, CBLL1/HAKAI, VIRMA, and, in some cases of RBM15 (RBM15 or RBM15B). Interacts with WT1. Also a component of a MACOM-like complex, named WTAP complex, composed of WTAP, ZC3H13, CBLL1, VIRMA, RBM15, BCLAF1 and THRAP3. Interacts with CPNE4 (via VWFA domain).

It is found in the nucleus speckle. It localises to the nucleus. The protein resides in the nucleoplasm. The protein localises to the cytoplasm. Associated component of the WMM complex, a complex that mediates N6-methyladenosine (m6A) methylation of RNAs, a modification that plays a role in the efficiency of mRNA splicing and RNA processing. Acts as a key regulator of m6A methylation by promoting m6A methylation of mRNAs at the 3'-UTR. Required for accumulation of METTL3 and METTL14 to nuclear speckle. Acts as a mRNA splicing regulator. Regulates G2/M cell-cycle transition by binding to the 3' UTR of CCNA2, which enhances its stability. Impairs WT1 DNA-binding ability and inhibits expression of WT1 target genes. This Mus musculus (Mouse) protein is Pre-mRNA-splicing regulator WTAP.